A 273-amino-acid polypeptide reads, in one-letter code: Undecaprenyl-diphosphatase (273 aa).

8 helical membrane passes run 4–24 (MELW…FAPV), 48–68 (AANT…VVVF), 89–109 (LNLI…VLFE), 116–136 (LFST…MIAA), 152–172 (ITYK…WPGF), 193–213 (ADFT…LSLL), 222–242 (ADIP…LLAI), and 252–272 (IRLV…YFLY).

It belongs to the UppP family.

Its subcellular location is the cell membrane. The enzyme catalyses di-trans,octa-cis-undecaprenyl diphosphate + H2O = di-trans,octa-cis-undecaprenyl phosphate + phosphate + H(+). Its function is as follows. Catalyzes the dephosphorylation of undecaprenyl diphosphate (UPP). Confers resistance to bacitracin. The sequence is that of Undecaprenyl-diphosphatase from Geobacillus kaustophilus (strain HTA426).